The chain runs to 36 residues: Pancreatic polypeptide (36 aa).

Position 36 is a tyrosine amide (Tyr36).

It belongs to the NPY family.

The protein localises to the secreted. Hormone secreted by pancreatic cells that acts as a regulator of pancreatic and gastrointestinal functions. This Struthio camelus (Common ostrich) protein is Pancreatic polypeptide (PPY).